Consider the following 372-residue polypeptide: NAD(P)H-quinone oxidoreductase subunit 1 (372 aa).

The next 8 membrane-spanning stretches (helical) occupy residues 27 to 47 (IIWLPLPMLIVLVSAVVGVLV), 97 to 117 (ILFTTGPILVLVPVILSWLIV), 128 to 148 (VGIGIFLWIALSSIQPIGLLM), 176 to 196 (LALSVLAVVLMTNSLSTIDIV), 204 to 224 (ILSWNIWRQPVGFIIFWICAL), 266 to 286 (ILSALLVSILYLGGWGFPIPV), 308 to 328 (SIGIIMTVLKAYLLVFIAILL), and 347 to 367 (FLLPISLANLLLTAGLKLALP).

This sequence belongs to the complex I subunit 1 family. In terms of assembly, NDH-1 is composed of at least 11 different subunits.

The protein localises to the cellular thylakoid membrane. The catalysed reaction is a plastoquinone + NADH + (n+1) H(+)(in) = a plastoquinol + NAD(+) + n H(+)(out). It catalyses the reaction a plastoquinone + NADPH + (n+1) H(+)(in) = a plastoquinol + NADP(+) + n H(+)(out). Functionally, NDH-1 shuttles electrons from an unknown electron donor, via FMN and iron-sulfur (Fe-S) centers, to quinones in the respiratory and/or the photosynthetic chain. The immediate electron acceptor for the enzyme in this species is believed to be plastoquinone. Couples the redox reaction to proton translocation, and thus conserves the redox energy in a proton gradient. The chain is NAD(P)H-quinone oxidoreductase subunit 1 from Prochlorococcus marinus (strain MIT 9515).